A 399-amino-acid chain; its full sequence is Subtilisin-like protease CPC735_033790 (399 aa).

The signal sequence occupies residues 1 to 20; the sequence is MGFLSSAILLLITAFPAAQA. The propeptide occupies 21–117; the sequence is GEMINAAAGA…VEPDRMVNIT (97 aa). The 80-residue stretch at 37 to 116 folds into the Inhibitor I9 domain; the sequence is SYIVVMNEGI…YVEPDRMVNI (80 aa). An N-linked (GlcNAc...) asparagine glycan is attached at N115. Residues 127–399 form the Peptidase S8 domain; that stretch reads SYGLGRISNK…NRLLYNNSGV (273 aa). Residues D159 and H190 each act as charge relay system in the active site. N251 is a glycosylation site (N-linked (GlcNAc...) asparagine). The active-site Charge relay system is S345. N-linked (GlcNAc...) asparagine glycosylation is present at N395.

This sequence belongs to the peptidase S8 family.

Its subcellular location is the secreted. In terms of biological role, secreted subtilisin-like serine protease with keratinolytic activity that contributes to pathogenicity. In Coccidioides posadasii (strain C735) (Valley fever fungus), this protein is Subtilisin-like protease CPC735_033790.